A 290-amino-acid polypeptide reads, in one-letter code: RWD domain-containing protein 2B (290 aa).

The region spanning 12 to 136 is the RWD domain; sequence SELDLLASMF…EWVKEHAFDY (125 aa).

The protein is RWD domain-containing protein 2B (Rwdd2b) of Mus musculus (Mouse).